The chain runs to 536 residues: Berberine bridge enzyme-like 2 (536 aa).

The N-terminal stretch at M1–A20 is a signal peptide. Residues C35 and C98 are joined by a disulfide bond. N-linked (GlcNAc...) asparagine glycosylation is found at N38, N73, N136, N266, N334, and N352. The FAD-binding PCMH-type domain maps to A76 to V250. The segment at residues H113–C175 is a cross-link (6-(S-cysteinyl)-8alpha-(pros-histidyl)-FAD (His-Cys)).

It belongs to the oxygen-dependent FAD-linked oxidoreductase family. FAD serves as cofactor. In terms of processing, the FAD cofactor is bound via a bicovalent 6-S-cysteinyl, 8alpha-N1-histidyl FAD linkage.

Its subcellular location is the secreted. The protein resides in the cell wall. The polypeptide is Berberine bridge enzyme-like 2 (Arabidopsis thaliana (Mouse-ear cress)).